The primary structure comprises 1383 residues: DNA-directed RNA polymerase subunit beta (1383 aa).

Belongs to the RNA polymerase beta chain family. The RNAP catalytic core consists of 2 alpha, 1 beta, 1 beta' and 1 omega subunit. When a sigma factor is associated with the core the holoenzyme is formed, which can initiate transcription.

The enzyme catalyses RNA(n) + a ribonucleoside 5'-triphosphate = RNA(n+1) + diphosphate. DNA-dependent RNA polymerase catalyzes the transcription of DNA into RNA using the four ribonucleoside triphosphates as substrates. The protein is DNA-directed RNA polymerase subunit beta of Xanthomonas euvesicatoria pv. vesicatoria (strain 85-10) (Xanthomonas campestris pv. vesicatoria).